The following is a 459-amino-acid chain: Vacuolar cation/proton exchanger 3 (459 aa).

Residues 1–67 (MGSIVEPWAA…TLKNILSNLQ (67 aa)) lie on the Cytoplasmic side of the membrane. A helical transmembrane segment spans residues 68 to 88 (EVILGTKLTLLFLAIPLAILA). Residues 89–95 (NSYNYGR) lie on the Extracellular side of the membrane. A helical membrane pass occupies residues 96–116 (PLIFGLSLIGLTPLAERVSFL). The Cytoplasmic segment spans residues 117-129 (TEQLAFYTGPTVG). A helical membrane pass occupies residues 130–150 (GLLNATCGNATELIIAILALA). The cation selection stretch occupies residues 137–172 (GNATELIIAILALANNKVAVVKYSLLGSILSNLLLV). The Extracellular portion of the chain corresponds to 151 to 161 (NNKVAVVKYSL). A helical transmembrane segment spans residues 162–182 (LGSILSNLLLVLGTSLFFGGI). Residues 183–195 (ANIRREQRFDRKQ) lie on the Cytoplasmic side of the membrane. The chain crosses the membrane as a helical span at residues 196–216 (ADVNFFLLLMGLLCHLLPLLL). Topologically, residues 217 to 238 (KYAATGEVSTSMINKMSLTLSR) are extracellular. The chain crosses the membrane as a helical span at residues 239–259 (TSSIVMLIAYIAYLIFQLWTH). Residues 260–283 (RQLFEAQQDDDDAYDDEVSVEETP) are Cytoplasmic-facing. The chain crosses the membrane as a helical span at residues 284-304 (VIGFWSGFAWLVGMTIVIALL). The Extracellular segment spans residues 305–327 (SEYVVDTIEDASDSWGLSVSFIS). Residues 328–348 (IILLPIVGNAAEHAGAIIFAF) traverse the membrane as a helical segment. Residues 335 to 370 (GNAAEHAGAIIFAFKNKLDISLGVALGSATQISLFV) are cation selection. Topologically, residues 349-362 (KNKLDISLGVALGS) are cytoplasmic. Residues 363–383 (ATQISLFVVPLSVIVAWILGI) traverse the membrane as a helical segment. The Extracellular segment spans residues 384–386 (KMD). The chain crosses the membrane as a helical span at residues 387 to 407 (LNFNILETSSLALAIIITAFT). The Cytoplasmic portion of the chain corresponds to 408-417 (LQDGTSHYMK). Residues 418-438 (GLVLLLCYVIIAACFFVDQIP) traverse the membrane as a helical segment. At 439–459 (QPNDLDVGLQPMNNLGEVFSA) the chain is on the extracellular side.

It belongs to the Ca(2+):cation antiporter (CaCA) (TC 2.A.19) family. Cation/proton exchanger (CAX) subfamily. Expressed in roots, stems and flowers.

The protein localises to the vacuole membrane. With respect to regulation, inhibited by excess of Ca(2+). Vacuolar cation/proton exchanger (CAX). Translocates Ca(2+) and other metal ions into vacuoles using the proton gradient formed by H(+)-ATPase and H(+)-pyrophosphatase. Involved in ion homeostasis in association with CAX1. The protein is Vacuolar cation/proton exchanger 3 (CAX3) of Arabidopsis thaliana (Mouse-ear cress).